The following is a 261-amino-acid chain: MGAIRGPVRKIDLNCDMGESFGVYRIGADEEIMPLITSANIACGFHGGDPQVMRRTVRLAREHGVAVGAHPGYRDLVGFWRRPVRCSPDEVYADVLYQIGALAAFCRAEGVALRHVKPHGALYNTAAADAAIAGAVARAVADFDRSLMLYAPPGSALEQAGLAAGLRVIREGFADRGYAADGTLLPRTHPGAVLHEPERAAAQARGMVCSGTVTADTGEEVAVPAETLCVHGDHPSVIQVLRRIRSELEAAGVSVGAPGAD.

It belongs to the LamB/PxpA family. As to quaternary structure, forms a complex composed of PxpA, PxpB and PxpC.

It catalyses the reaction 5-oxo-L-proline + ATP + 2 H2O = L-glutamate + ADP + phosphate + H(+). Catalyzes the cleavage of 5-oxoproline to form L-glutamate coupled to the hydrolysis of ATP to ADP and inorganic phosphate. This is 5-oxoprolinase subunit A from Symbiobacterium thermophilum (strain DSM 24528 / JCM 14929 / IAM 14863 / T).